The primary structure comprises 261 residues: Cytochrome c oxidase subunit 3 (261 aa).

Over 1-15 the chain is Mitochondrial matrix; the sequence is MTHQTHAYHMVNPSP. Residues 16–34 traverse the membrane as a helical segment; the sequence is WPLTGALSALLMTSGLAMW. The Mitochondrial intermembrane segment spans residues 35–40; sequence FHFNST. A helical membrane pass occupies residues 41–66; that stretch reads LLLALGLLTNILTMYQWWRDIIREST. Over 67–72 the chain is Mitochondrial matrix; that stretch reads FQGHHT. The chain crosses the membrane as a helical span at residues 73 to 105; the sequence is SIVQKGLRYGMILFIISEVFFFSGFFWAFYHSS. Topologically, residues 106 to 128 are mitochondrial intermembrane; the sequence is LAPTPELGGCWPPTGIHPLNPLE. Residues 129–152 form a helical membrane-spanning segment; that stretch reads VPLLNTSVLLASGVSITWAHHSLM. Residues 153-155 lie on the Mitochondrial matrix side of the membrane; the sequence is EGN. The helical transmembrane segment at 156–183 threads the bilayer; sequence RKNMLQGLFITISLGVYFTLLQASEYYE. At 184-190 the chain is on the mitochondrial intermembrane side; sequence ASFTISD. The helical transmembrane segment at 191-223 threads the bilayer; it reads GVYGSTFFVATGFHGLHVIIGSTFLIVCFLRQL. Topologically, residues 224–232 are mitochondrial matrix; that stretch reads KFHFTSSHH. A helical membrane pass occupies residues 233–256; the sequence is FGFEAAAWYWHFVDVVWLFLYVSI. Over 257 to 261 the chain is Mitochondrial intermembrane; it reads YWWGS.

This sequence belongs to the cytochrome c oxidase subunit 3 family. Component of the cytochrome c oxidase (complex IV, CIV), a multisubunit enzyme composed of 14 subunits. The complex is composed of a catalytic core of 3 subunits MT-CO1, MT-CO2 and MT-CO3, encoded in the mitochondrial DNA, and 11 supernumerary subunits COX4I, COX5A, COX5B, COX6A, COX6B, COX6C, COX7A, COX7B, COX7C, COX8 and NDUFA4, which are encoded in the nuclear genome. The complex exists as a monomer or a dimer and forms supercomplexes (SCs) in the inner mitochondrial membrane with NADH-ubiquinone oxidoreductase (complex I, CI) and ubiquinol-cytochrome c oxidoreductase (cytochrome b-c1 complex, complex III, CIII), resulting in different assemblies (supercomplex SCI(1)III(2)IV(1) and megacomplex MCI(2)III(2)IV(2)).

The protein localises to the mitochondrion inner membrane. It carries out the reaction 4 Fe(II)-[cytochrome c] + O2 + 8 H(+)(in) = 4 Fe(III)-[cytochrome c] + 2 H2O + 4 H(+)(out). Component of the cytochrome c oxidase, the last enzyme in the mitochondrial electron transport chain which drives oxidative phosphorylation. The respiratory chain contains 3 multisubunit complexes succinate dehydrogenase (complex II, CII), ubiquinol-cytochrome c oxidoreductase (cytochrome b-c1 complex, complex III, CIII) and cytochrome c oxidase (complex IV, CIV), that cooperate to transfer electrons derived from NADH and succinate to molecular oxygen, creating an electrochemical gradient over the inner membrane that drives transmembrane transport and the ATP synthase. Cytochrome c oxidase is the component of the respiratory chain that catalyzes the reduction of oxygen to water. Electrons originating from reduced cytochrome c in the intermembrane space (IMS) are transferred via the dinuclear copper A center (CU(A)) of subunit 2 and heme A of subunit 1 to the active site in subunit 1, a binuclear center (BNC) formed by heme A3 and copper B (CU(B)). The BNC reduces molecular oxygen to 2 water molecules using 4 electrons from cytochrome c in the IMS and 4 protons from the mitochondrial matrix. The sequence is that of Cytochrome c oxidase subunit 3 (MT-CO3) from Equus asinus (Donkey).